A 716-amino-acid polypeptide reads, in one-letter code: Lamin-like protein (716 aa).

Composition is skewed to basic residues over residues 1 to 10 (MDMSKKKSKR) and 35 to 45 (KKTKTTTKKKA). Residues 1–107 (MDMSKKKSKR…TIQSIPTTPI (107 aa)) form a disordered region. Over residues 62–107 (ITTTTTSTSTTNNNNITTTSTSSQQSNGTLSSSSSPTIQSIPTTPI) the composition is skewed to low complexity. Residues 130 to 450 (LREKDELSLI…KMRKQMADLK (321 aa)) are a coiled coil. The IF rod domain occupies 132 to 515 (EKDELSLIHN…ELVKGFEKTV (384 aa)). The Nuclear localization signal motif lies at 519-522 (KRKR). A disordered region spans residues 519 to 584 (KRKRSKLQHE…PTGPEQSELF (66 aa)). The span at 532 to 545 (AANQDQNGMTIEEQ) shows a compositional bias: polar residues. Residues 546–564 (SSTSTTTTTSATGSSSSTS) are compositionally biased toward low complexity. The span at 565–584 (HLDNIDSSKLPTGPEQSELF) shows a compositional bias: polar residues. Positions 575 to 698 (PTGPEQSELF…EETTTVTLPA (124 aa)) constitute an LTD domain. A CAAX motif motif is present at residues 713–716 (CLIM).

This sequence belongs to the intermediate filament family. Homodimer. Lamin dimers then assemble into dimeric head-to-tail polymers. Ultimately, two head-to-tail polymers assemble laterally into a protofilament with a uniformly shaped rod of 3.5 nm in diameter.

It is found in the nucleus lamina. The protein resides in the nucleus envelope. The protein localises to the nucleus inner membrane. In terms of biological role, lamins are intermediate filament proteins that assemble into a filamentous meshwork, and which constitute the major components of the nuclear lamina, a fibrous layer on the nucleoplasmic side of the inner nuclear membrane. Lamins provide a framework for the nuclear envelope, bridging the nuclear envelope and chromatin, thereby playing an important role in nuclear assembly, chromatin organization, nuclear membrane and telomere dynamics. The structural integrity of the lamina is strictly controlled by the cell cycle, as seen by the disintegration and formation of the nuclear envelope in prophase and telophase, respectively. Helps to maintain integrity of nuclear structures in response to mechanical stress. This is Lamin-like protein from Dictyostelium discoideum (Social amoeba).